A 224-amino-acid polypeptide reads, in one-letter code: Large ribosomal subunit protein uL11c (224 aa).

The N-terminal 66 residues, 1-66 (MAQPLVAAPS…SHRRLSIVAM (66 aa)), are a transit peptide targeting the chloroplast. Lysine 75 and lysine 111 each carry N6,N6,N6-trimethyllysine.

Component of the chloroplast large ribosomal subunit (LSU). Mature 70S chloroplast ribosomes of higher plants consist of a small (30S) and a large (50S) subunit. The 30S small subunit contains 1 molecule of ribosomal RNA (16S rRNA) and 24 different proteins. The 50S large subunit contains 3 rRNA molecules (23S, 5S and 4.5S rRNA) and 33 different proteins.

The protein resides in the plastid. It localises to the chloroplast. Component of the chloroplast ribosome (chloro-ribosome), a dedicated translation machinery responsible for the synthesis of chloroplast genome-encoded proteins, including proteins of the transcription and translation machinery and components of the photosynthetic apparatus. The chain is Large ribosomal subunit protein uL11c (rpl11) from Spinacia oleracea (Spinach).